The chain runs to 65 residues: U12-theraphotoxin-Cg1a (65 aa).

Positions Met1–Ala21 are cleaved as a signal peptide. Positions Ile22–Arg29 are excised as a propeptide. Cystine bridges form between Cys31-Cys45, Cys38-Cys50, and Cys44-Cys57.

Belongs to the neurotoxin 10 (Hwtx-1) family. 31 (Jztx-15) subfamily. As to expression, expressed by the venom gland.

Its subcellular location is the secreted. In terms of biological role, probable ion channel inhibitor. The chain is U12-theraphotoxin-Cg1a from Chilobrachys guangxiensis (Chinese earth tiger tarantula).